The following is a 154-amino-acid chain: Large ribosomal subunit protein uL13 (154 aa).

It belongs to the universal ribosomal protein uL13 family. Part of the 50S ribosomal subunit.

Its function is as follows. This protein is one of the early assembly proteins of the 50S ribosomal subunit, although it is not seen to bind rRNA by itself. It is important during the early stages of 50S assembly. The chain is Large ribosomal subunit protein uL13 from Rhizobium johnstonii (strain DSM 114642 / LMG 32736 / 3841) (Rhizobium leguminosarum bv. viciae).